A 417-amino-acid polypeptide reads, in one-letter code: UDP-N-acetylglucosamine 1-carboxyvinyltransferase (417 aa).

22 to 23 serves as a coordination point for phosphoenolpyruvate; that stretch reads KN. Arginine 91 contributes to the UDP-N-acetyl-alpha-D-glucosamine binding site. The Proton donor role is filled by cysteine 115. Residue cysteine 115 is modified to 2-(S-cysteinyl)pyruvic acid O-phosphothioketal. Residues 120 to 124, aspartate 304, and isoleucine 326 contribute to the UDP-N-acetyl-alpha-D-glucosamine site; that span reads RPVDL.

This sequence belongs to the EPSP synthase family. MurA subfamily.

It localises to the cytoplasm. It carries out the reaction phosphoenolpyruvate + UDP-N-acetyl-alpha-D-glucosamine = UDP-N-acetyl-3-O-(1-carboxyvinyl)-alpha-D-glucosamine + phosphate. It participates in cell wall biogenesis; peptidoglycan biosynthesis. In terms of biological role, cell wall formation. Adds enolpyruvyl to UDP-N-acetylglucosamine. The sequence is that of UDP-N-acetylglucosamine 1-carboxyvinyltransferase from Nitratidesulfovibrio vulgaris (strain DSM 19637 / Miyazaki F) (Desulfovibrio vulgaris).